The following is a 158-amino-acid chain: Small ribosomal subunit protein uS15 (158 aa).

Residues 1-18 (MARMHARKRGKSGSKRPP) are compositionally biased toward basic residues. The interval 1–21 (MARMHARKRGKSGSKRPPRTA) is disordered.

It belongs to the universal ribosomal protein uS15 family. In terms of assembly, part of the 30S ribosomal subunit.

The protein is Small ribosomal subunit protein uS15 of Pyrococcus furiosus (strain ATCC 43587 / DSM 3638 / JCM 8422 / Vc1).